Here is a 202-residue protein sequence, read N- to C-terminus: Putative 3-methyladenine DNA glycosylase (202 aa).

This sequence belongs to the DNA glycosylase MPG family.

This chain is Putative 3-methyladenine DNA glycosylase, found in Alkaliphilus oremlandii (strain OhILAs) (Clostridium oremlandii (strain OhILAs)).